The following is a 303-amino-acid chain: Recombination-associated protein RdgC (303 aa).

Belongs to the RdgC family.

The protein resides in the cytoplasm. The protein localises to the nucleoid. Its function is as follows. May be involved in recombination. The sequence is that of Recombination-associated protein RdgC from Salmonella agona (strain SL483).